The chain runs to 910 residues: E3 ubiquitin-protein ligase MARCHF6 (910 aa).

M1 carries the N-acetylmethionine modification. The RING-CH-type zinc-finger motif lies at 1 to 62 (MDTAEEDICR…ELCKHRFAFT (62 aa)). The Cytoplasmic portion of the chain corresponds to 1–91 (MDTAEEDICR…LVTSIGTAIR (91 aa)). Zn(2+)-binding residues include C9, C12, C26, C28, H36, C39, C52, and C55. Residues 92-112 (YWFHYTLVAFAWLGVVPLTAC) traverse the membrane as a helical segment. The Extracellular portion of the chain corresponds to 113–142 (RIYKCLFTGSVSSLLTLPLDMLSTENLLAD). Residues 143 to 163 (CLQGCFVVTCTLCAFISLVWL) form a helical membrane-spanning segment. The Cytoplasmic portion of the chain corresponds to 164 to 283 (REQIVHGGAP…WERMLGLDGS (120 aa)). A disordered region spans residues 185–256 (AAGHHQNEAP…AADANNGAQD (72 aa)). Positions 223–248 (DAQDDQAEEEEEDNEEEDDAGVEDAA) are enriched in acidic residues. The chain crosses the membrane as a helical span at residues 284 to 304 (LVFLEHVFWVVSLNTLFILVF). Over 305 to 336 (AFCPYHIGHFSLVGLGFEEHVQASHFEGLITT) the chain is Extracellular. A helical transmembrane segment spans residues 337-357 (IVGYILLAITLIICHGLATLV). Residues 358-376 (KFHRSRRLLGVCYIVVKVS) lie on the Cytoplasmic side of the membrane. The helical transmembrane segment at 377 to 397 (LLVVVEIGVFPLICGWWLDIC) threads the bilayer. The Extracellular segment spans residues 398–421 (SLEMFDATLKDRELSFQSAPGTTM). Residues 422 to 442 (FLHWLVGMVYVFYFASFILLL) traverse the membrane as a helical segment. Residues 443-480 (REVLRPGVLWFLRNLNDPDFNPVQEMIHLPIYRHLRRF) are Cytoplasmic-facing. Residues 481–501 (ILSVIVFGSIVLLMLWLPIRI) form a helical membrane-spanning segment. The Extracellular segment spans residues 502-519 (IKSVLPNFLPYNVMLYSD). The helical transmembrane segment at 520 to 540 (APVSELSLELLLLQVVLPALL) threads the bilayer. Over 541 to 632 (EQGHTRQWLK…YRRPLNFPLR (92 aa)) the chain is Cytoplasmic. The chain crosses the membrane as a helical span at residues 633-653 (IFLLIVFMCITLLIASLICLT). Residues 654–678 (LPVFAGRWLMSFWTGTAKIHELYTA) lie on the Extracellular side of the membrane. A helical membrane pass occupies residues 679–699 (ACGLYVCWLTIRAVTVMVAWM). At 700 to 721 (PQGRRVIFQKVKEWSLMIMKTL) the chain is on the cytoplasmic side. A helical transmembrane segment spans residues 722–742 (IVAVLLAGVVPLLLGLLFELV). The Extracellular segment spans residues 743-764 (IVAPLRVPLDQTPLFYPWQDWA). Residues 765-785 (LGVLHAKIIAAITLMGPQWWL) traverse the membrane as a helical segment. Residues 786–815 (KTVIEQVYANGIRNIDLHYIVRKLAAPVIS) are Cytoplasmic-facing. The chain crosses the membrane as a helical span at residues 816–836 (VLLLSLCVPYVIASGVVPLLG). Residues 837–848 (VTAEMQNLVHRR) are Extracellular-facing. The helical transmembrane segment at 849–869 (IYPFLLMVVVLMAILSFQVRQ) threads the bilayer. At 870-910 (FKRLYEHIKNDKYLVGQRLVNYERKSGKQGSSPPPPQSSQE) the chain is on the cytoplasmic side.

In terms of assembly, interacts with DIO2. Interacts with SQLE. Post-translationally, auto-ubiquitinated, which results in proteasomal degradation. Deubiquitinated by USP19; protecting MARCHF6 from p97-mediated proteasomal degradation. Present in brain (at protein level).

It localises to the endoplasmic reticulum membrane. The enzyme catalyses S-ubiquitinyl-[E2 ubiquitin-conjugating enzyme]-L-cysteine + [acceptor protein]-L-lysine = [E2 ubiquitin-conjugating enzyme]-L-cysteine + N(6)-ubiquitinyl-[acceptor protein]-L-lysine.. The protein operates within protein modification; protein ubiquitination. In terms of biological role, endoplasmic reticulum membrane-associated E3 ubiquitin ligase that plays a critical role in mitigating endoplasmic reticulum stress, the regulation of cholesterol and lipid homeostasis, and ferroptosis. Acts as a pivotal component of both the Ac/N-degron pathway (targeting the N-terminal acetyl group of substrates) and the ER-associated protein degradation-cytosol (ERAD-C) pathway (targeting misfolded substrates). For instance, mediates the degradation of Ac/N-degron-bearing proteins such as the G-protein regulator RGS2 and the lipid droplet protein PLIN2. Suppresses endoplasmic reticulum stress and ferroptosis through cytosolic POMC degradation. Prevents ferroptosis by acting as a NADPH sensor during lipid peroxidation through its C-terminal regulatory region. Facilitates also the degradation of selected endoplasmic reticulum proteins by associating with signal peptide peptidase for the turnover of endogenous tail-anchored proteins. Promotes ubiquitination of DIO2, leading to its degradation. By ubiquitinating and thereby modulating the stability of many proteins of the cholesterol pathway including SQLE, CYP51A1, CYP11A1 and HMGCR, acts as a crucial post-translational regulator of cholesterol synthesis. In Homo sapiens (Human), this protein is E3 ubiquitin-protein ligase MARCHF6.